Reading from the N-terminus, the 809-residue chain is Hydrazine synthase subunit alpha (809 aa).

The N-terminal stretch at 1–27 (MGKRKLGVIASAFVAGALVCGSTLVNA) is a signal peptide. Cys-303 serves as a coordination point for Zn(2+). Positions 583 and 586 each coordinate heme. Position 587 (His-587) interacts with Zn(2+). Heme is bound by residues Tyr-591, Cys-685, Cys-688, His-689, and His-772. The 160-residue stretch at 633 to 792 (KGVKHGEDVV…AIVEWIDLGA (160 aa)) folds into the Cytochrome c domain.

In terms of assembly, part of the hydrazine synthase complex that forms an elongated dimer of heterotrimers composed of one alpha, one beta and one gamma subunit. Heme c serves as cofactor.

It is found in the anammoxosome. It carries out the reaction hydrazine + 3 Fe(III)-[cytochrome c] + H2O = nitric oxide + 3 Fe(II)-[cytochrome c] + NH4(+) + 2 H(+). It functions in the pathway nitrogen metabolism. Its function is as follows. Component of the hydrazine synthase complex that catalyzes the condensation of nitric oxide (NO) with ammonium to form hydrazine. The alpha subunit catalyzes the second half-reaction, i.e. the condensation of hydroxylamine formed in the active site of the gamma subunit with ammonia, yielding hydrazine. Is involved in anaerobic ammonium oxidation (anammox), a biological process in which nitrite is used as the electron acceptor in the conversion of ammonium to dinitrogen gas (N2) and water; this bacterial process has a major role in the Earth's nitrogen cycle and has been estimated to synthesize up to 50% of the dinitrogen gas emitted into our atmosphere from the oceans. The protein is Hydrazine synthase subunit alpha of Kuenenia stuttgartiensis.